Reading from the N-terminus, the 325-residue chain is MVPREAPESAQCLCPSLTIPNAKDVLRKRHKRRSRQHQRFMARKALLQEQGLLSMPPEPGSSPLPTPFGAATATEAASSGKQCLRAGSGSAPCSRRPAPGKASGPLPSKCVAIDCEMVGTGPRGRVSELARCSIVSYHGNVLYDKYIRPEMPIADYRTRWSGITRQHMRKAVPFQVAQKEILKLLKGKVVVGHALHNDFQALKYVHPRSQTRDTTYVPNFLSEPGLHTRARVSLKDLALQLLHKKIQVGQHGHSSVEDATTAMELYRLVEVQWEQQEARSLWTCPEDREPDSSTDMEQYMEDQYWPDDLAHGSRGGAREAQDRRN.

The Nucleolar localization signal signature appears at 27 to 35; the sequence is RKRHKRRSR. Residues 85–105 are disordered; sequence RAGSGSAPCSRRPAPGKASGP. The Exonuclease domain occupies 110–266; the sequence is CVAIDCEMVG…EDATTAMELY (157 aa). The short motif at 165-188 is the Nuclear localization signal element; sequence RQHMRKAVPFQVAQKEILKLLKGK. The segment at 281 to 325 is disordered; it reads LWTCPEDREPDSSTDMEQYMEDQYWPDDLAHGSRGGAREAQDRRN. A compositionally biased stretch (basic and acidic residues) spans 308 to 325; sequence DLAHGSRGGAREAQDRRN.

It is found in the nucleus. The protein resides in the nucleolus. Its function is as follows. Exonuclease with activity against single- and double-stranded DNA and RNA. Mediates p53-induced apoptosis. When induced by p53 following DNA damage, digests double-stranded DNA to form single-stranded DNA and amplifies DNA damage signals, leading to enhancement of apoptosis. In Homo sapiens (Human), this protein is Apoptosis-enhancing nuclease (AEN).